A 261-amino-acid polypeptide reads, in one-letter code: uncharacterized protein (261 aa).

Residue 41-48 (GKSGSGKS) coordinates ATP.

The protein belongs to the IIV-6 075L family.

This is an uncharacterized protein from Invertebrate iridescent virus 3 (IIV-3).